We begin with the raw amino-acid sequence, 413 residues long: Multifunctional CCA protein (413 aa).

Positions 8 and 11 each coordinate ATP. The CTP site is built by Gly-8 and Arg-11. Mg(2+)-binding residues include Glu-21 and Asp-23. 3 residues coordinate ATP: Arg-91, Arg-137, and Arg-140. Arg-91, Arg-137, and Arg-140 together coordinate CTP. The HD domain maps to 228 to 329; sequence TGEHTLLALA…LKLLEGLDLF (102 aa).

Belongs to the tRNA nucleotidyltransferase/poly(A) polymerase family. Bacterial CCA-adding enzyme type 1 subfamily. In terms of assembly, monomer. Can also form homodimers and oligomers. The cofactor is Mg(2+). Ni(2+) serves as cofactor.

It catalyses the reaction a tRNA precursor + 2 CTP + ATP = a tRNA with a 3' CCA end + 3 diphosphate. The enzyme catalyses a tRNA with a 3' CCA end + 2 CTP + ATP = a tRNA with a 3' CCACCA end + 3 diphosphate. Functionally, catalyzes the addition and repair of the essential 3'-terminal CCA sequence in tRNAs without using a nucleic acid template. Adds these three nucleotides in the order of C, C, and A to the tRNA nucleotide-73, using CTP and ATP as substrates and producing inorganic pyrophosphate. tRNA 3'-terminal CCA addition is required both for tRNA processing and repair. Also involved in tRNA surveillance by mediating tandem CCA addition to generate a CCACCA at the 3' terminus of unstable tRNAs. While stable tRNAs receive only 3'-terminal CCA, unstable tRNAs are marked with CCACCA and rapidly degraded. This chain is Multifunctional CCA protein, found in Alkalilimnicola ehrlichii (strain ATCC BAA-1101 / DSM 17681 / MLHE-1).